Reading from the N-terminus, the 200-residue chain is Peptidyl-tRNA hydrolase (200 aa).

Tyr16 provides a ligand contact to tRNA. The Proton acceptor role is filled by His21. Residues Phe67, Asn69, and Asn115 each contribute to the tRNA site.

The protein belongs to the PTH family. In terms of assembly, monomer.

It localises to the cytoplasm. It catalyses the reaction an N-acyl-L-alpha-aminoacyl-tRNA + H2O = an N-acyl-L-amino acid + a tRNA + H(+). Hydrolyzes ribosome-free peptidyl-tRNAs (with 1 or more amino acids incorporated), which drop off the ribosome during protein synthesis, or as a result of ribosome stalling. In terms of biological role, catalyzes the release of premature peptidyl moieties from peptidyl-tRNA molecules trapped in stalled 50S ribosomal subunits, and thus maintains levels of free tRNAs and 50S ribosomes. The sequence is that of Peptidyl-tRNA hydrolase from Prochlorococcus marinus (strain AS9601).